The chain runs to 475 residues: Crocetin glucosyltransferase 3 (475 aa).

The active-site Proton acceptor is the histidine 16. Histidine 16 is an an anthocyanidin binding site. The active-site Charge relay is aspartate 123. UDP-alpha-D-glucose contacts are provided by threonine 144, alanine 354, glutamine 356, histidine 371, tryptophan 374, asparagine 375, serine 376, and glutamate 379. Alanine 394 is an an anthocyanidin binding site. UDP-alpha-D-glucose is bound by residues glutamate 395 and glutamine 396.

It belongs to the UDP-glycosyltransferase family. In terms of tissue distribution, mainly expressed in stamens.

The enzyme catalyses crocetin + UDP-alpha-D-glucose = beta-D-glucosyl crocetin + UDP. It carries out the reaction beta-D-glucosyl crocetin + UDP-alpha-D-glucose = bis(beta-D-glucosyl) crocetin + UDP. The catalysed reaction is beta-D-gentiobiosyl crocetin + UDP-alpha-D-glucose = beta-D-gentiobiosyl beta-D-glucosyl crocetin + UDP. In terms of biological role, crocetin glucosyltransferase involved in the synthesis of crocin, one of the apocarotenoids responsible for the color and bitter taste of saffron. The protein is Crocetin glucosyltransferase 3 (GLT3) of Crocus sativus (Saffron).